The chain runs to 179 residues: ATP synthase subunit delta (179 aa).

This sequence belongs to the ATPase delta chain family. F-type ATPases have 2 components, F(1) - the catalytic core - and F(0) - the membrane proton channel. F(1) has five subunits: alpha(3), beta(3), gamma(1), delta(1), epsilon(1). F(0) has three main subunits: a(1), b(2) and c(10-14). The alpha and beta chains form an alternating ring which encloses part of the gamma chain. F(1) is attached to F(0) by a central stalk formed by the gamma and epsilon chains, while a peripheral stalk is formed by the delta and b chains.

Its subcellular location is the cell membrane. In terms of biological role, f(1)F(0) ATP synthase produces ATP from ADP in the presence of a proton or sodium gradient. F-type ATPases consist of two structural domains, F(1) containing the extramembraneous catalytic core and F(0) containing the membrane proton channel, linked together by a central stalk and a peripheral stalk. During catalysis, ATP synthesis in the catalytic domain of F(1) is coupled via a rotary mechanism of the central stalk subunits to proton translocation. Functionally, this protein is part of the stalk that links CF(0) to CF(1). It either transmits conformational changes from CF(0) to CF(1) or is implicated in proton conduction. This chain is ATP synthase subunit delta, found in Clostridium botulinum (strain Kyoto / Type A2).